The following is a 93-amino-acid chain: Large ribosomal subunit protein uL23 (93 aa).

The protein belongs to the universal ribosomal protein uL23 family. Part of the 50S ribosomal subunit. Contacts protein L29, and trigger factor when it is bound to the ribosome.

In terms of biological role, one of the early assembly proteins it binds 23S rRNA. One of the proteins that surrounds the polypeptide exit tunnel on the outside of the ribosome. Forms the main docking site for trigger factor binding to the ribosome. The chain is Large ribosomal subunit protein uL23 from Campylobacter curvus (strain 525.92).